A 458-amino-acid chain; its full sequence is Delta(8)-fatty-acid desaturase (458 aa).

One can recognise a Cytochrome b5 heme-binding domain in the interval 16–100; it reads KKYITSKELK…LKDYQVSDIS (85 aa). The heme site is built by H51 and H74. 2 helical membrane-spanning segments follow: residues 122–142 and 147–167; these read GVIY…YGVL and FWIH…IAYL. Residues 169–173 carry the Histidine box-1 motif; it reads HDAGH. A helical transmembrane segment spans residues 185-205; that stretch reads FAGIFIGNCITGISIAWWKWT. The Histidine box-2 signature appears at 206–210; it reads HNAHH. Transmembrane regions (helical) follow at residues 264–284, 293–313, and 320–340; these read YYPI…LLLI, GLNI…VSRL, and VAFV…FTLN. The short motif at 383–387 is the Histidine box-3 element; the sequence is QLEHH.

This sequence belongs to the fatty acid desaturase type 1 family. It depends on Fe cation as a cofactor.

It localises to the membrane. It carries out the reaction an N-acyl-(4R)-4-hydroxysphinganine + 2 Fe(II)-[cytochrome b5] + O2 + 2 H(+) = a (4R,8E)-4-hydroxysphingenine ceramide + 2 Fe(III)-[cytochrome b5] + 2 H2O. The catalysed reaction is an N-acyl-(4R)-4-hydroxysphinganine + 2 Fe(II)-[cytochrome b5] + O2 + 2 H(+) = a (4R,8Z)-4-hydroxysphing-8-enine ceramide + 2 Fe(III)-[cytochrome b5] + 2 H2O. Functionally, plays a major role as delta(8)-fatty-acid desaturase which introduces a double bond at the 8-position in the long-chain base (LCB) of ceramides with or without a hydroxy group at the 4-position. The enzyme produces both the 8E and 8Z isomers. This structural modification contributes to the quantitative partitioning of ceramides between the two major sphingolipid classes, glucosylceramides and glycosylinositolphosphoryl ceramides. Sphingolipids are important membrane components involved in environmental stress responses, such as resistance to chilling, and act as cell signaling molecules. The polypeptide is Delta(8)-fatty-acid desaturase (sld1) (Helianthus annuus (Common sunflower)).